A 347-amino-acid polypeptide reads, in one-letter code: Farnesyl pyrophosphate synthase ERG20 (347 aa).

3 residues coordinate isopentenyl diphosphate: Lys-50, Arg-53, and Gln-88. Asp-95 and Asp-99 together coordinate Mg(2+). Arg-104 is a dimethylallyl diphosphate binding site. Arg-105 serves as a coordination point for isopentenyl diphosphate. Dimethylallyl diphosphate-binding residues include Lys-192, Thr-193, Gln-232, Lys-249, and Lys-258.

The protein belongs to the FPP/GGPP synthase family. It depends on Mg(2+) as a cofactor.

The enzyme catalyses isopentenyl diphosphate + dimethylallyl diphosphate = (2E)-geranyl diphosphate + diphosphate. The catalysed reaction is isopentenyl diphosphate + (2E)-geranyl diphosphate = (2E,6E)-farnesyl diphosphate + diphosphate. The protein operates within isoprenoid biosynthesis; farnesyl diphosphate biosynthesis; farnesyl diphosphate from geranyl diphosphate and isopentenyl diphosphate: step 1/1. Its pathway is isoprenoid biosynthesis; geranyl diphosphate biosynthesis; geranyl diphosphate from dimethylallyl diphosphate and isopentenyl diphosphate: step 1/1. Its function is as follows. Farnesyl pyrophosphate synthase; part of the second module of ergosterol biosynthesis pathway that includes the middle steps of the pathway. ERG20 catalyzes the sequential condensation of isopentenyl pyrophosphate with dimethylallyl pyrophosphate, and then with the resultant geranylpyrophosphate to the ultimate product farnesyl pyrophosphate. The second module is carried out in the vacuole and involves the formation of farnesyl diphosphate, which is also an important intermediate in the biosynthesis of ubiquinone, dolichol, heme and prenylated proteins. Activity by the mevalonate kinase ERG12 (FG05912) first converts mevalonate into 5-phosphomevalonate. 5-phosphomevalonate is then further converted to 5-diphosphomevalonate by the phosphomevalonate kinase ERG8 (FG09764). The diphosphomevalonate decarboxylase ERG19 (FG10424) then produces isopentenyl diphosphate. The isopentenyl-diphosphate delta-isomerase IDI1 (FG09722) then catalyzes the 1,3-allylic rearrangement of the homoallylic substrate isopentenyl (IPP) to its highly electrophilic allylic isomer, dimethylallyl diphosphate (DMAPP). Finally the farnesyl diphosphate synthase ERG20 (FG06784) catalyzes the sequential condensation of isopentenyl pyrophosphate with dimethylallyl pyrophosphate, and then with the resultant geranylpyrophosphate to the ultimate product farnesyl pyrophosphate. In Gibberella zeae (strain ATCC MYA-4620 / CBS 123657 / FGSC 9075 / NRRL 31084 / PH-1) (Wheat head blight fungus), this protein is Farnesyl pyrophosphate synthase ERG20.